Here is a 274-residue protein sequence, read N- to C-terminus: 2,3,4,5-tetrahydropyridine-2,6-dicarboxylate N-succinyltransferase (274 aa).

Substrate contacts are provided by R104 and D141.

Belongs to the transferase hexapeptide repeat family. As to quaternary structure, homotrimer.

Its subcellular location is the cytoplasm. It catalyses the reaction (S)-2,3,4,5-tetrahydrodipicolinate + succinyl-CoA + H2O = (S)-2-succinylamino-6-oxoheptanedioate + CoA. Its pathway is amino-acid biosynthesis; L-lysine biosynthesis via DAP pathway; LL-2,6-diaminopimelate from (S)-tetrahydrodipicolinate (succinylase route): step 1/3. This chain is 2,3,4,5-tetrahydropyridine-2,6-dicarboxylate N-succinyltransferase, found in Sodalis glossinidius (strain morsitans).